Consider the following 901-residue polypeptide: HTH-type transcriptional regulator MalT (901 aa).

39–46 is an ATP binding site; sequence SPAGYGKT. Residues 829–894 enclose the HTH luxR-type domain; the sequence is ELIRTSPLTQ…DAVQHAQQLL (66 aa). A DNA-binding region (H-T-H motif) is located at residues 853 to 872; that stretch reads NEQIAGELEVAATTIKTHIR.

Belongs to the MalT family. In terms of assembly, monomer in solution. Oligomerizes to an active state in the presence of the positive effectors ATP and maltotriose.

With respect to regulation, activated by ATP and maltotriose, which are both required for DNA binding. In terms of biological role, positively regulates the transcription of the maltose regulon whose gene products are responsible for uptake and catabolism of malto-oligosaccharides. Specifically binds to the promoter region of its target genes, recognizing a short DNA motif called the MalT box. This chain is HTH-type transcriptional regulator MalT, found in Escherichia coli (strain K12 / MC4100 / BW2952).